Consider the following 437-residue polypeptide: Minor capsid protein p49 (437 aa).

This sequence belongs to the asfivirus p49 structural protein family.

The protein resides in the virion. Its function is as follows. Together with the penton and the other minor capsid proteins (M1249L, p17), forms a complicated network immediately below the outer capsid shell, stabilizing the whole capsid. Plays an essential role in the formation of infectious virus particles. Especially required for the formation of the capsid vertices. During virion assembly, associates with the membrane and probably mediates the docking of the penton complex to the inner membrane, where it recruits the capsomers to form the penton core. This Ornithodoros (relapsing fever ticks) protein is Minor capsid protein p49.